The following is a 769-amino-acid chain: Gephyrin (769 aa).

The MPT Mo-transferase stretch occupies residues 14-153; sequence QIRVGVLTVS…LPGSKKGSQE (140 aa). The segment at 140-349 is interaction with GABARAP; the sequence is LIINLPGSKK…VDITKVARRH (210 aa). 2 disordered regions span residues 181–232 and 260–299; these read DELE…DSSS and TASL…SKGV. Positions 187-199 are enriched in pro residues; sequence PSPPPPLSPPPTT. 2 positions are modified to phosphoserine: S188 and S194. T198 is subject to Phosphothreonine. Phosphoserine is present on S200. Residue C212 is the site of S-palmitoyl cysteine attachment. Over residues 261-286 the composition is skewed to polar residues; sequence ASLSTTPSESPRAQATSRLSTASCPT. S262 is subject to Phosphoserine. Phosphothreonine occurs at positions 265 and 266. A phosphoserine mark is found at S268 and S270. C284 is lipidated: S-palmitoyl cysteine. The interval 327 to 769 is MPT adenylyltransferase; sequence SSKENILRAS…VVDVMVIGRL (443 aa). A Phosphoserine modification is found at S338.

This sequence in the N-terminal section; belongs to the MoaB/Mog family. The protein in the C-terminal section; belongs to the MoeA family. Homotrimer, homodimer and homooligomer. Interacts with SRGAP2 (via SH3 domain). Interacts with GLRB. Interacts with GABARAP. Interacts with GABRA3. GABRA3 and GLRB occupy overlapping binding sites. Interacts with ARHGAP32; IQSEC3, INSYN1 and INSYN2A. It depends on Mg(2+) as a cofactor. In terms of processing, palmitoylated. Palmitoylation is stimulated by GABA type A receptors activity. Palmitoylation by ZDHHC12 regulates clustering at synapses.

It localises to the postsynaptic cell membrane. It is found in the cell membrane. The protein localises to the cytoplasm. Its subcellular location is the cytosol. The protein resides in the cytoskeleton. It localises to the cell projection. It is found in the dendrite. The protein localises to the postsynaptic density. The enzyme catalyses molybdopterin + ATP + H(+) = adenylyl-molybdopterin + diphosphate. It carries out the reaction adenylyl-molybdopterin + molybdate = Mo-molybdopterin + AMP + H(+). It participates in cofactor biosynthesis; molybdopterin biosynthesis. Inhibited by copper and tungsten. In terms of biological role, microtubule-associated protein involved in membrane protein-cytoskeleton interactions. It is thought to anchor the inhibitory glycine receptor (GLYR) to subsynaptic microtubules. Acts as a major instructive molecule at inhibitory synapses, where it also clusters GABA type A receptors. Its function is as follows. Also has a catalytic activity and catalyzes two steps in the biosynthesis of the molybdenum cofactor. In the first step, molybdopterin is adenylated. Subsequently, molybdate is inserted into adenylated molybdopterin and AMP is released. This chain is Gephyrin (Gphn), found in Mus musculus (Mouse).